The following is a 321-amino-acid chain: Probable arabinan endo-1,5-alpha-L-arabinosidase A (321 aa).

An N-terminal signal peptide occupies residues 1 to 19 (MYRLLSVASVPLLASLVHG). The Proton acceptor role is filled by aspartate 34. The active-site Proton donor is glutamate 200. Asparagine 295 carries N-linked (GlcNAc...) asparagine glycosylation.

Belongs to the glycosyl hydrolase 43 family.

It is found in the secreted. It catalyses the reaction Endohydrolysis of (1-&gt;5)-alpha-arabinofuranosidic linkages in (1-&gt;5)-arabinans.. The protein operates within glycan metabolism; L-arabinan degradation. Its function is as follows. Endo-1,5-alpha-L-arabinanase involved in degradation of pectin. Its preferred substrate is linear 1,5-alpha-L-arabinan. This chain is Probable arabinan endo-1,5-alpha-L-arabinosidase A (abnA), found in Aspergillus niger (strain ATCC MYA-4892 / CBS 513.88 / FGSC A1513).